Reading from the N-terminus, the 301-residue chain is MEIRRRPPNPSVKVAHLQYAIPHADAEPRHILEKIVWEKDREVETARQRVPLETLKSQIADLPIPRDFIAALRQASRAPAVIAEVKKASPSQGVIRADFDPVLIANAYAEGGASCLSVLTDKSFFQGGFEVLVEVRQTVGLPLLCKDFILTPYQLYQARAAGADAALLIVAILSDQDLTYLSKVANSLGLNVLVEVHDAEELERVLNLGGFPLIGINNRDLTTFETDLETTETLSQQFATRLQQQGVLLVSESGLFNRADLDRVQAVGAEAVLVGEALMRQSDVCAGLQQLMIGDEGTSNS.

It belongs to the TrpC family.

The enzyme catalyses 1-(2-carboxyphenylamino)-1-deoxy-D-ribulose 5-phosphate + H(+) = (1S,2R)-1-C-(indol-3-yl)glycerol 3-phosphate + CO2 + H2O. It participates in amino-acid biosynthesis; L-tryptophan biosynthesis; L-tryptophan from chorismate: step 4/5. The protein is Indole-3-glycerol phosphate synthase of Prochlorococcus marinus (strain MIT 9313).